The chain runs to 1108 residues: Retinal guanylyl cyclase 2 (1108 aa).

The signal sequence occupies residues 1–50; sequence MFLGPWPFSRLLSWFAISSRLSGQHGLTSSKFLRYLCLLALLPLIWWGQA. The Extracellular segment spans residues 51-465; it reads LPYKIGVIGP…QGKICQGGID (415 aa). Cysteines 104 and 132 form a disulfide. The chain crosses the membrane as a helical span at residues 466–490; the sequence is PALAMMVCFALLLALLSINGFAYFI. At 491–1108 the chain is on the cytoplasmic side; that stretch reads RRRINKIQLI…AERQLVRNKP (618 aa). The 281-residue stretch at 532 to 812 folds into the Protein kinase domain; that stretch reads FQIISEVQSG…DEIFNQFKTF (281 aa). Residues 884 to 1014 enclose the Guanylate cyclase domain; it reads TLYFSDIVGF…DTVNTASRME (131 aa).

It belongs to the adenylyl cyclase class-4/guanylyl cyclase family. Homodimer. Interacts with RD3; promotes the exit of GUCY2F from the endoplasmic reticulum and its trafficking to the photoreceptor outer segments. In terms of processing, there are 9 conserved cysteine residues in sensory guanylate cyclases, 6 in the extracellular domain, which may be involved in intra- or interchain disulfide bonds. In terms of tissue distribution, expressed only in the eye.

The protein localises to the membrane. It is found in the photoreceptor outer segment membrane. The catalysed reaction is GTP = 3',5'-cyclic GMP + diphosphate. With respect to regulation, activated by GUCA1B when free calcium ions concentration is low, and inhibited by GUCA1B when free calcium ions concentration is high. Inhibited by RD3. Functionally, responsible for the synthesis of cyclic GMP (cGMP) in rods and cones of photoreceptors. Plays an essential role in phototransduction, by mediating cGMP replenishment. May also participate in the trafficking of membrane-asociated proteins to the photoreceptor outer segment membrane. The chain is Retinal guanylyl cyclase 2 (Gucy2f) from Rattus norvegicus (Rat).